Here is a 683-residue protein sequence, read N- to C-terminus: Methionine--tRNA ligase (683 aa).

Residues 14-24 carry the 'HIGH' region motif; that stretch reads PYANGSIHLGH. Zn(2+)-binding residues include Cys-145, Cys-148, Cys-158, and Cys-161. The short motif at 331 to 335 is the 'KMSKS' region element; it reads KMSKS. Residue Lys-334 coordinates ATP. Residues 581-683 enclose the tRNA-binding domain; the sequence is AFAAVDLRVA…SGAKPGQRIK (103 aa).

This sequence belongs to the class-I aminoacyl-tRNA synthetase family. MetG type 1 subfamily. In terms of assembly, homodimer. Requires Zn(2+) as cofactor.

The protein localises to the cytoplasm. The catalysed reaction is tRNA(Met) + L-methionine + ATP = L-methionyl-tRNA(Met) + AMP + diphosphate. Is required not only for elongation of protein synthesis but also for the initiation of all mRNA translation through initiator tRNA(fMet) aminoacylation. This is Methionine--tRNA ligase from Pseudomonas fluorescens (strain SBW25).